The following is a 655-amino-acid chain: Spastin (655 aa).

Over 1–58 (MLFDLINSFLKNGINNSNNNNNNNNNKNNFYNSLEDDDYLLNNQTTKVSLYLYFFIFA) the chain is Cytoplasmic. The segment at residues 59-79 (FMFLVVDLIMLYYKHRENIES) is an intramembrane region (helical). At 80–655 (RETDLSLKLN…EKWNQKFGTI (576 aa)) the chain is on the cytoplasmic side. Low complexity predominate over residues 102–140 (KSSPTTSTTTTTITPTTTSSSQLRQPSTPKTTTKTINSP). The tract at residues 102–151 (KSSPTTSTTTTTITPTTTSSSQLRQPSTPKTTTKTINSPPSTPKSPPPLP) is disordered. The segment covering 141 to 151 (PSTPKSPPPLP) has biased composition (pro residues). The MIT domain maps to 169–232 (LNEAKSQIDS…KRAEYLKNEL (64 aa)). The tract at residues 261 to 325 (EQQQQQQQQS…TITSPGNKYG (65 aa)) is disordered. The segment covering 262 to 320 (QQQQQQQQSSSTYRNSLNLSSSKSNSTINNRHSISSLSSLNSTTATTTTPSNTSTITSP) has biased composition (low complexity). 424 to 431 (GPPGNGKT) lines the ATP pocket.

Belongs to the AAA ATPase family. Spastin subfamily. In terms of assembly, homohexamer. The homohexamer is stabilized by ATP-binding. The homohexamer may adopt a ring conformation through which microtubules pass prior to being severed. Interacts with microtubules.

Its subcellular location is the membrane. The protein localises to the cytoplasm. The protein resides in the cytoskeleton. It localises to the microtubule organizing center. It is found in the centrosome. The enzyme catalyses n ATP + n H2O + a microtubule = n ADP + n phosphate + (n+1) alpha/beta tubulin heterodimers.. Functionally, ATP-dependent microtubule severing protein. Microtubule severing may promote reorganization of cellular microtubule arrays and the release of microtubules from the microtubule organizing center following nucleation. The chain is Spastin from Dictyostelium discoideum (Social amoeba).